Reading from the N-terminus, the 371-residue chain is Queuine tRNA-ribosyltransferase (371 aa).

The active-site Proton acceptor is the Asp-90. Substrate is bound by residues Asp-90–Phe-94, Asp-144, Gln-189, and Gly-215. The RNA binding stretch occupies residues Gly-246 to Asn-252. The active-site Nucleophile is Asp-265. Positions Thr-270 to Arg-274 are RNA binding; important for wobble base 34 recognition. The Zn(2+) site is built by Cys-303, Cys-305, Cys-308, and His-334.

It belongs to the queuine tRNA-ribosyltransferase family. Homodimer. Within each dimer, one monomer is responsible for RNA recognition and catalysis, while the other monomer binds to the replacement base PreQ1. Zn(2+) serves as cofactor.

The catalysed reaction is 7-aminomethyl-7-carbaguanine + guanosine(34) in tRNA = 7-aminomethyl-7-carbaguanosine(34) in tRNA + guanine. It functions in the pathway tRNA modification; tRNA-queuosine biosynthesis. Its function is as follows. Catalyzes the base-exchange of a guanine (G) residue with the queuine precursor 7-aminomethyl-7-deazaguanine (PreQ1) at position 34 (anticodon wobble position) in tRNAs with GU(N) anticodons (tRNA-Asp, -Asn, -His and -Tyr). Catalysis occurs through a double-displacement mechanism. The nucleophile active site attacks the C1' of nucleotide 34 to detach the guanine base from the RNA, forming a covalent enzyme-RNA intermediate. The proton acceptor active site deprotonates the incoming PreQ1, allowing a nucleophilic attack on the C1' of the ribose to form the product. After dissociation, two additional enzymatic reactions on the tRNA convert PreQ1 to queuine (Q), resulting in the hypermodified nucleoside queuosine (7-(((4,5-cis-dihydroxy-2-cyclopenten-1-yl)amino)methyl)-7-deazaguanosine). The protein is Queuine tRNA-ribosyltransferase of Helicobacter pylori (strain P12).